The following is a 103-amino-acid chain: Large ribosomal subunit protein bL21 (103 aa).

The protein belongs to the bacterial ribosomal protein bL21 family. In terms of assembly, part of the 50S ribosomal subunit. Contacts protein L20.

This protein binds to 23S rRNA in the presence of protein L20. This is Large ribosomal subunit protein bL21 from Legionella pneumophila (strain Lens).